An 831-amino-acid chain; its full sequence is AdoMet-dependent rRNA methyltransferase SPB1 (831 aa).

The S-adenosyl-L-methionine site is built by G58, W60, D78, D94, and D119. K159 acts as the Proton acceptor in catalysis. 2 coiled-coil regions span residues 346-389 and 440-479; these read LTED…QMNM and NDINFDEEADANSEDEIDELEAQLDDMYNSYQNRRAERDA. 2 disordered regions span residues 492 to 535 and 565 to 645; these read DEGW…ADQR and MNKK…DQQS. Residues 499–510 show a composition bias toward basic and acidic residues; the sequence is ESDKEGSDKETE. Composition is skewed to acidic residues over residues 511 to 526, 594 to 611, and 618 to 631; these read ANDYEMESESDSDDDE, MEVDSSDSENDVSDDSDF, and PDEELSDSDSDNEN. Over residues 632–645 the composition is skewed to basic and acidic residues; the sequence is DVSRKYSKAKDQQS. Positions 729 to 782 form a coiled coil; it reads LEAQGRKKLRALKRLEKLKKKSDMINEDSAKSERDKADEIQKLMKKLTKKQKTK.

The protein belongs to the class I-like SAM-binding methyltransferase superfamily. RNA methyltransferase RlmE family. SPB1 subfamily. As to quaternary structure, component of the nucleolar and nucleoplasmic pre-60S ribosomal particle.

The protein resides in the nucleus. It is found in the nucleolus. It catalyses the reaction a ribonucleotide in rRNA + S-adenosyl-L-methionine = a 2'-O-methylribonucleotide in rRNA + S-adenosyl-L-homocysteine + H(+). Its function is as follows. Required for proper assembly of pre-ribosomal particles during the biogenesis of the 60S ribosomal subunit. This Debaryomyces hansenii (strain ATCC 36239 / CBS 767 / BCRC 21394 / JCM 1990 / NBRC 0083 / IGC 2968) (Yeast) protein is AdoMet-dependent rRNA methyltransferase SPB1.